The primary structure comprises 205 residues: Large ribosomal subunit protein uL10 (205 aa).

Positions 167-205 (AQGAAPAEAKAEAPASEEKAADTPAEQPAESAPEAAPEA) are disordered. Composition is skewed to low complexity over residues 169–180 (GAAPAEAKAEAP) and 190–205 (PAEQ…APEA).

The protein belongs to the universal ribosomal protein uL10 family. In terms of assembly, part of the ribosomal stalk of the 50S ribosomal subunit. The N-terminus interacts with L11 and the large rRNA to form the base of the stalk. The C-terminus forms an elongated spine to which L12 dimers bind in a sequential fashion forming a multimeric L10(L12)X complex.

Its function is as follows. Forms part of the ribosomal stalk, playing a central role in the interaction of the ribosome with GTP-bound translation factors. The chain is Large ribosomal subunit protein uL10 from Treponema denticola (strain ATCC 35405 / DSM 14222 / CIP 103919 / JCM 8153 / KCTC 15104).